The primary structure comprises 431 residues: Glutamate-1-semialdehyde 2,1-aminomutase (431 aa).

Lysine 269 is modified (N6-(pyridoxal phosphate)lysine).

It belongs to the class-III pyridoxal-phosphate-dependent aminotransferase family. HemL subfamily. As to quaternary structure, homodimer. The cofactor is pyridoxal 5'-phosphate.

Its subcellular location is the cytoplasm. It carries out the reaction (S)-4-amino-5-oxopentanoate = 5-aminolevulinate. The protein operates within porphyrin-containing compound metabolism; protoporphyrin-IX biosynthesis; 5-aminolevulinate from L-glutamyl-tRNA(Glu): step 2/2. It functions in the pathway porphyrin-containing compound metabolism; chlorophyll biosynthesis. In Chlorobaculum tepidum (strain ATCC 49652 / DSM 12025 / NBRC 103806 / TLS) (Chlorobium tepidum), this protein is Glutamate-1-semialdehyde 2,1-aminomutase.